We begin with the raw amino-acid sequence, 808 residues long: Transcription activator of gluconeogenesis PAAG_01030 (808 aa).

A disordered region spans residues 1 to 90 (MTSSVRNGSP…SAKDPLRPRR (90 aa)). Residues 69 to 83 (STSSTAASANNASAK) are compositionally biased toward low complexity. The segment at residues 97 to 125 (CFACQRAHLTCGDERPCQRCIKRGLQDTC) is a DNA-binding region (zn(2)-C6 fungal-type). The span at 158-170 (AARNKVNSNSQQR) shows a compositional bias: polar residues. 5 disordered regions span residues 158 to 203 (AARN…FSTP), 236 to 285 (SAFQ…YGST), 322 to 387 (GAGD…IYNQ), 442 to 461 (PPTNTQHQQQPQPPRISTPS), and 598 to 629 (TGGSSSSGVSSRGSSTYNSRNSATTTVMDNQS). A compositionally biased stretch (low complexity) spans 171 to 188 (NGTNSNSDNNSTNTNSNN). Composition is skewed to polar residues over residues 189-203 (KPSHQDVSTNFFSTP), 248-279 (FDLSSNPQNHTLSPSIAQNSGTTPSSSASQNP), 339-359 (GRSSGTFTVQNFGEGSSNQSP), and 377-387 (GPTNPRNIYNQ). 2 stretches are compositionally biased toward low complexity: residues 442–451 (PPTNTQHQQQ) and 598–619 (TGGSSSSGVSSRGSSTYNSRNS). A compositionally biased stretch (polar residues) spans 620-629 (ATTTVMDNQS).

This sequence belongs to the ERT1/acuK family.

Its subcellular location is the nucleus. Functionally, transcription factor which regulates nonfermentable carbon utilization. Activator of gluconeogenetic genes. The protein is Transcription activator of gluconeogenesis PAAG_01030 of Paracoccidioides lutzii (strain ATCC MYA-826 / Pb01) (Paracoccidioides brasiliensis).